We begin with the raw amino-acid sequence, 781 residues long: Protein argonaute (781 aa).

Residues 110 to 194 (SMNELLTERR…RHNDYCNSVM (85 aa)) enclose the PAZ domain. Residues 436-760 (LVVIVIPGPK…LSKFCGEVLR (325 aa)) enclose the Piwi domain.

The protein belongs to the argonaute family. Ago subfamily. As to quaternary structure, interacts with miR2. Highly specific binding to the mRNA m7G-cap. May be a component of the RNA-induced silencing complex (RISC), a sequence-specific, multicomponent nuclease that destroys or silences messenger RNAs homologous to the silencing trigger.

Its subcellular location is the cytoplasm. Plays an essential role in growth and, with Dicer, also involved in microRNA (miRNA)-mediated translational repression. The RNA interference pathway is implicated in antigenic variation having a role in regulation of variant-specific surface protein (VSP)-coding gene expression. Several VSP genes are transcribed but only transcripts encoding the VSP to be expressed accumulate. Antisense RNAs corresponding to the silenced VSP genes are detected. This chain is Protein argonaute, found in Giardia intestinalis (Giardia lamblia).